The chain runs to 350 residues: Protein RecA (350 aa).

Residue 67–74 coordinates ATP; it reads GPESSGKT.

It belongs to the RecA family.

It is found in the cytoplasm. Functionally, can catalyze the hydrolysis of ATP in the presence of single-stranded DNA, the ATP-dependent uptake of single-stranded DNA by duplex DNA, and the ATP-dependent hybridization of homologous single-stranded DNAs. It interacts with LexA causing its activation and leading to its autocatalytic cleavage. The chain is Protein RecA from Wolinella succinogenes (strain ATCC 29543 / DSM 1740 / CCUG 13145 / JCM 31913 / LMG 7466 / NCTC 11488 / FDC 602W) (Vibrio succinogenes).